A 284-amino-acid chain; its full sequence is Tropomyosin (284 aa).

A coiled-coil region spans residues 1-284 (MDAIKKKMLM…DQALNELHNM (284 aa)). 2 disordered regions span residues 106 to 134 (LNSTVEKLTDSEKAADESERARKVLENRQ) and 186 to 221 (AETKARELEDELKTTTGQLKSMEAQATKASEKEEAY). 2 stretches are compositionally biased toward basic and acidic residues: residues 112–134 (KLTDSEKAADESERARKVLENRQ) and 186–198 (AETKARELEDELK).

This sequence belongs to the tropomyosin family. In terms of assembly, homodimer.

Its function is as follows. Tropomyosin, in association with the troponin complex, plays a central role in the calcium dependent regulation of muscle contraction. In Branchiostoma belcheri (Amphioxus), this protein is Tropomyosin (TPM).